The primary structure comprises 382 residues: MRILNVSLLVLTAFLVDFVECGRDFYKILGVSKNANANQIKKAYRKQAKELHPDRNPDDEMANEKFQDLSAAYEVLSDKEKRAMYDRHGEEGVAKMGGGGGGGHDPFSSFFGDFFGGGGGNGGDEGTPKGADVTIDLFVTLEEAYNGHFVEIKRKKAVYKQTSGTRQCNCRHEMRTEQMGQGRFQMFQVKVCDECPNVKLVQENKVLEVEVEVGADEGHTQIFHGEGEPHIEGDPGDLKFKIRIQKHPRFLISVTGIEIIELKVDELVELLLEGIRFERKGDDLYTNVTISLQDALNGFEMEILHLDGHMVKVQRDKVTWPGARLRKKDEGMPSMENNNKKGMLIVTFDVEFPKTELTDEQKAQIIEILQQQGIKPRAYNGL.

The N-terminal stretch at 1 to 21 (MRILNVSLLVLTAFLVDFVEC) is a signal peptide. The region spanning 24 to 89 (DFYKILGVSK…EKRAMYDRHG (66 aa)) is the J domain.

The protein is DnaJ homolog dnj-20 of Caenorhabditis briggsae.